Consider the following 432-residue polypeptide: Trigger factor (432 aa).

The PPIase FKBP-type domain maps to 161–246 (DDRVTIDFVG…LKKVENMVLP (86 aa)).

This sequence belongs to the FKBP-type PPIase family. Tig subfamily.

The protein localises to the cytoplasm. The catalysed reaction is [protein]-peptidylproline (omega=180) = [protein]-peptidylproline (omega=0). Functionally, involved in protein export. Acts as a chaperone by maintaining the newly synthesized protein in an open conformation. Functions as a peptidyl-prolyl cis-trans isomerase. This Haemophilus influenzae (strain PittGG) protein is Trigger factor.